Here is a 235-residue protein sequence, read N- to C-terminus: Vacuolar protein sorting-associated protein 60.1 (235 aa).

The interval 1–29 (MRRVFGAKKNTEPPPSIQDASDRINKRGD) is disordered. The segment covering 20 to 29 (ASDRINKRGD) has biased composition (basic and acidic residues). A coiled-coil region spans residues 99-148 (LKDAQQTMTALKSANKELKGMMKTVKIQDIDNLQDEMMDLMDVSSEIQES). Residues 175 to 235 (MGNETEADGM…PAVPRASLRG (61 aa)) form a disordered region.

The protein belongs to the SNF7 family. Interacts with SKD1/VPS4 and LIP5. Interacts with VPS2.2.

Its subcellular location is the endosome. It is found in the multivesicular body membrane. Functionally, probable peripherally associated component of the endosomal sorting required for transport complex III (ESCRT-III) which is involved in multivesicular bodies (MVBs) formation and sorting of endosomal cargo proteins into MVBs. This is Vacuolar protein sorting-associated protein 60.1 from Arabidopsis thaliana (Mouse-ear cress).